The primary structure comprises 303 residues: MKNLLSMEALTVHEIEHLLEQAAQFKRGKKATFNEQTFAVNMFFEPSTRTHTSFEVAEKKLGVEVVSFDAASSSMTKGETLYDTLLTMQAVGVNVAVIRHSEENYYAGLEKLDIAIVNGGDGCGEHPSQSLLDLFTIKEQFGTFQGLKVAIAGDIRHSRVANSNMKVLKRLGAELFFSGPREWFDESYLAYGTYLPVDEIVEKVDVMMLLRVQHERHSGTDEFTKESYHEKFGLTEDRAKKLKEDAIIMHPSPVNRDVEIADSLVESEKSRIVTQMTNGVFIRMAILEAILKEQEMRAKLCTY.

Carbamoyl phosphate-binding residues include Arg-49 and Thr-50. Lys-77 lines the L-aspartate pocket. Carbamoyl phosphate contacts are provided by Arg-99, His-126, and Gln-129. L-aspartate is bound by residues Arg-159 and Arg-211. Carbamoyl phosphate contacts are provided by Ser-252 and Pro-253.

Belongs to the aspartate/ornithine carbamoyltransferase superfamily. ATCase family. In terms of assembly, heterododecamer (2C3:3R2) of six catalytic PyrB chains organized as two trimers (C3), and six regulatory PyrI chains organized as three dimers (R2).

The enzyme catalyses carbamoyl phosphate + L-aspartate = N-carbamoyl-L-aspartate + phosphate + H(+). Its pathway is pyrimidine metabolism; UMP biosynthesis via de novo pathway; (S)-dihydroorotate from bicarbonate: step 2/3. Functionally, catalyzes the condensation of carbamoyl phosphate and aspartate to form carbamoyl aspartate and inorganic phosphate, the committed step in the de novo pyrimidine nucleotide biosynthesis pathway. The sequence is that of Aspartate carbamoyltransferase catalytic subunit from Listeria monocytogenes serovar 1/2a (strain ATCC BAA-679 / EGD-e).